Reading from the N-terminus, the 315-residue chain is Zinc transport protein ZntB (315 aa).

At 1-250 (MGFMIEHWDF…RDEKTNKNSY (250 aa)) the chain is on the cytoplasmic side. A helical membrane pass occupies residues 251 to 271 (LFTLVATIFLPTSFLTGLLGI). At 272-282 (NIGGMPGVESS) the chain is on the periplasmic side. A helical membrane pass occupies residues 283 to 303 (MAFTWFCIALIVIFGLEWLLF). Residues 304 to 315 (KRLGFTNKTDDE) lie on the Cytoplasmic side of the membrane.

The protein belongs to the CorA metal ion transporter (MIT) (TC 1.A.35) family. In terms of assembly, homopentamer. Can assemble pentamers in the absence of the transmembrane regions.

Its subcellular location is the cell inner membrane. The enzyme catalyses Zn(2+)(out) + H(+)(out) = Zn(2+)(in) + H(+)(in). In terms of biological role, zinc transporter. Acts as a Zn(2+):proton symporter, which likely mediates zinc ion uptake. The sequence is that of Zinc transport protein ZntB from Vibrio parahaemolyticus serotype O3:K6 (strain RIMD 2210633).